The primary structure comprises 111 residues: Parvalbumin alpha (111 aa).

An N-acetylthreonine; in form C2 modification is found at T1. 2 EF-hand domains span residues 40–75 and 79–111; these read KPDDTLKEVFGILDQDKSGYIEEEELKFVLKGFAAG and LTANETKALLKAGDQDGDDKIGVDEFTNLVKAA. D53, D55, S57, Y59, E61, E64, D92, D94, D96, K98, and E103 together coordinate Ca(2+).

Belongs to the parvalbumin family. Post-translationally, acetylation of Thr-1 converts C1 to C2.

Functionally, in muscle, parvalbumin is thought to be involved in relaxation after contraction. It binds two calcium ions. The polypeptide is Parvalbumin alpha (Latimeria chalumnae (Coelacanth)).